A 242-amino-acid chain; its full sequence is Probable transcriptional regulatory protein XOO1543 (242 aa).

This sequence belongs to the TACO1 family.

The protein resides in the cytoplasm. This chain is Probable transcriptional regulatory protein XOO1543, found in Xanthomonas oryzae pv. oryzae (strain MAFF 311018).